A 435-amino-acid polypeptide reads, in one-letter code: Probable tRNA pseudouridine synthase D (435 aa).

D95 (nucleophile) is an active-site residue. In terms of domain architecture, TRUD spans 170-396 (GVPNYFGTQR…SSGTRRAVLV (227 aa)).

Belongs to the pseudouridine synthase TruD family.

It catalyses the reaction uridine(13) in tRNA = pseudouridine(13) in tRNA. In terms of biological role, could be responsible for synthesis of pseudouridine from uracil-13 in transfer RNAs. The polypeptide is Probable tRNA pseudouridine synthase D (Natronomonas pharaonis (strain ATCC 35678 / DSM 2160 / CIP 103997 / JCM 8858 / NBRC 14720 / NCIMB 2260 / Gabara) (Halobacterium pharaonis)).